Here is a 291-residue protein sequence, read N- to C-terminus: Phosphatidylglycerol--prolipoprotein diacylglyceryl transferase (291 aa).

7 helical membrane passes run 21-41 (IALH…MWLA), 60-80 (LLYA…VLFY), 96-116 (WDGG…MWWF), 124-144 (FLQV…MGRI), 198-218 (SQLY…NLYI), 225-245 (GSVS…VEFF), and 258-278 (ISMG…MMIW). Position 143 (Arg143) interacts with a 1,2-diacyl-sn-glycero-3-phospho-(1'-sn-glycerol).

This sequence belongs to the Lgt family.

It is found in the cell inner membrane. The enzyme catalyses L-cysteinyl-[prolipoprotein] + a 1,2-diacyl-sn-glycero-3-phospho-(1'-sn-glycerol) = an S-1,2-diacyl-sn-glyceryl-L-cysteinyl-[prolipoprotein] + sn-glycerol 1-phosphate + H(+). Its pathway is protein modification; lipoprotein biosynthesis (diacylglyceryl transfer). In terms of biological role, catalyzes the transfer of the diacylglyceryl group from phosphatidylglycerol to the sulfhydryl group of the N-terminal cysteine of a prolipoprotein, the first step in the formation of mature lipoproteins. This Photorhabdus laumondii subsp. laumondii (strain DSM 15139 / CIP 105565 / TT01) (Photorhabdus luminescens subsp. laumondii) protein is Phosphatidylglycerol--prolipoprotein diacylglyceryl transferase.